The chain runs to 412 residues: MPSQGNNKNSENITQNPIEGELGSVIVEHLTKRIRNFTKKKQKILKLEEIAASDSNSLNDDQRKALQGKDAVLTTLNELKELLSQIDATRIRDEKHKRQFEATENAKRKEEIEAQYREGYDTAQKQVSSLVRFLRFASHNCVHPSDDAPFNSAVEKLLVIVYEGTEKSEKAVADLNDSSTDVVPESEVSFQTISSRVDNFFAAPLPSEQAEELIEDDYAEQPEQAVGQPIEQQSISDDEARQTNRPLNRGIQFLNESEIEGQHVEEPALPSETSVPANSTLQVPTENVEVDVLGKDGTNIYPTQNQVVEQKQMQQKLDSMSPEWYQAADPSNGVVDGTPKLNSNTRGSSKRPSVNRSQGSGQRGRGGRGFYRGGRGRGGFFNRSKRGQYSNSNNSTSQPSPNAELSNFNPVA.

Over residues 1-17 the composition is skewed to polar residues; sequence MPSQGNNKNSENITQNP. Disordered stretches follow at residues 1–20, 223–243, and 310–412; these read MPSQGNNKNSENITQNPIEG, EQAVGQPIEQQSISDDEARQT, and QKQM…NPVA. A compositionally biased stretch (polar residues) spans 340–355; that stretch reads KLNSNTRGSSKRPSVN. Over residues 361–379 the composition is skewed to gly residues; sequence GQRGRGGRGFYRGGRGRGG. The span at 390–402 shows a compositional bias: low complexity; that stretch reads SNSNNSTSQPSPN. A compositionally biased stretch (polar residues) spans 403 to 412; the sequence is AELSNFNPVA.

This is an uncharacterized protein from Schizosaccharomyces pombe (strain 972 / ATCC 24843) (Fission yeast).